The chain runs to 498 residues: MAKYIMALDAGTTSNRCILFNEKGEMCSVAQKEFTQFFPKPGWVEHDAEEIWATQLEVAKEAMANIQATAADICAIGITNQRETTIVWDKNTGEPVYHAIVWQCRRTAEYADSLKEKGLTETFRKKTGLVIDAYFSATKLKWLLDNVPGARERAERGELLFGTVETWLIWKLTQGQVHVTDYSNASRTMMFNINTLKWDDEILKELDIPKSMLPKPMPSSCVYGEVNPVYFGGPIPIAGAAGDQQAALFGQTCFRAGEAKNTYGTGCFLLMNTGEMPVSSKNGLVTTIAWGIDGKVVYALEGSIFVAGASIQWLRDEMKFIDSSTDSEYMARKVKDTNGCYVVPAFTGLGAPYWDQYARGTIVGLTRGVNKYHVIRATLESMAFQVNDVLEAMKADSGINLTSLKVDGGASANNLLMQMQADISNAPVNRPVCVETTAMGAAYLAGLAVGYWDSMDDIKRNWAIDRVFEPEIADDMREKKRKMWKKAVACAFNWAKDD.

Thr-12 contributes to the ADP binding site. The ATP site is built by Thr-12, Thr-13, and Ser-14. Sn-glycerol 3-phosphate is bound at residue Thr-12. Arg-16 lines the ADP pocket. Residues Arg-82, Glu-83, Tyr-134, and Asp-243 each contribute to the sn-glycerol 3-phosphate site. Residues Arg-82, Glu-83, Tyr-134, Asp-243, and Gln-244 each contribute to the glycerol site. ADP is bound by residues Thr-265 and Gly-308. ATP contacts are provided by Thr-265, Gly-308, Gln-312, and Gly-409. ADP contacts are provided by Gly-409 and Asn-413.

It belongs to the FGGY kinase family. As to quaternary structure, homotetramer and homodimer (in equilibrium).

It catalyses the reaction glycerol + ATP = sn-glycerol 3-phosphate + ADP + H(+). Its pathway is polyol metabolism; glycerol degradation via glycerol kinase pathway; sn-glycerol 3-phosphate from glycerol: step 1/1. Its activity is regulated as follows. Activated by phosphorylation and inhibited by fructose 1,6-bisphosphate (FBP). Its function is as follows. Key enzyme in the regulation of glycerol uptake and metabolism. Catalyzes the phosphorylation of glycerol to yield sn-glycerol 3-phosphate. In Agathobacter rectalis (strain ATCC 33656 / DSM 3377 / JCM 17463 / KCTC 5835 / VPI 0990) (Eubacterium rectale), this protein is Glycerol kinase.